A 477-amino-acid polypeptide reads, in one-letter code: Histidine permease HisP (477 aa).

12 helical membrane-spanning segments follow: residues 16–36 (ITMI…SGAT), 40–60 (AGPW…YFVM), 86–106 (PAFG…TIAV), 126–146 (IFSG…VGAF), 156–176 (IKVI…FGVL), 192–212 (HGFV…GFSF), 238–258 (SIFW…AAII), 284–304 (IGFA…VISS), 337–359 (IPFY…GIFG), 364–386 (LFLI…VSHI), 408–428 (WFPF…INLD), and 437–457 (WGEG…YFGY).

The protein belongs to the amino acid-polyamine-organocation (APC) superfamily. Amino acid transporter (AAT) (TC 2.A.3.1) family.

The protein resides in the cell membrane. Functionally, involved in histidine uptake. Has low affinity for arginine and lysine. Plays no significant role in the excretion of accumulated histidine. The chain is Histidine permease HisP from Lactococcus lactis subsp. cremoris (strain MG1363).